Reading from the N-terminus, the 365-residue chain is Coxsackievirus and adenovirus receptor homolog (365 aa).

The signal sequence occupies residues 1-19 (MALLLCFVLLCGVADFTSS). Ig-like C2-type domains are found at residues 20–136 (LSIT…FLLT) and 141–228 (PSGT…LRLD). The Extracellular segment spans residues 20–238 (LSITTPEQRI…VVPPSNRAGT (219 aa)). 3 disulfides stabilise this stretch: C41-C120, C146-C223, and C162-C212. N-linked (GlcNAc...) asparagine glycosylation occurs at N106. A helical membrane pass occupies residues 239-259 (IAGAVIGTLLALVLIGAILFC). Residues C259 and C260 are each lipidated (S-palmitoyl cysteine). Residues 260–365 (CHKKRREEKY…PAQSKDGSIV (106 aa)) lie on the Cytoplasmic side of the membrane. Basic and acidic residues predominate over residues 269–282 (YEKEVHHDIREDVP). Residues 269–315 (YEKEVHHDIREDVPPPKSRTSTARSYIGSNHSSLGSMSPSNMEGYSK) are disordered. A compositionally biased stretch (polar residues) spans 286 to 315 (SRTSTARSYIGSNHSSLGSMSPSNMEGYSK). 6 positions are modified to phosphoserine: S297, S304, S306, S323, S332, and S363. Positions 360-365 (KDGSIV) match the PDZ-binding motif.

As to quaternary structure, monomer. May form homodimer. Interacts with LNX, MAGI1, DLG4, PRKCABP, TJP1 and CTNNB1. Interacts with MPDZ; recruits MPDZ to intercellular contact sites. Interacts with JAML (homodimeric form). Post-translationally, N-glycosylated. In terms of processing, palmitoylated on Cys-259 and/or Cys-260; required for proper localization to the plasma membrane. As to expression, expressed in heart, brain, spleen, lung, liver, muscle, kidney, testis, spleen and skeletal muscle.

It localises to the cell membrane. The protein localises to the basolateral cell membrane. It is found in the cell junction. Its subcellular location is the tight junction. The protein resides in the adherens junction. Component of the epithelial apical junction complex that may function as a homophilic cell adhesion molecule and is essential for tight junction integrity. Also involved in transepithelial migration of leukocytes through adhesive interactions with JAML a transmembrane protein of the plasma membrane of leukocytes. The interaction between both receptors also mediates the activation of gamma-delta T-cells, a subpopulation of T-cells residing in epithelia and involved in tissue homeostasis and repair. Upon epithelial CXADR-binding, JAML induces downstream cell signaling events in gamma-delta T-cells through PI3-kinase and MAP kinases. It results in proliferation and production of cytokines and growth factors by T-cells that in turn stimulate epithelial tissues repair. The sequence is that of Coxsackievirus and adenovirus receptor homolog (Cxadr) from Rattus norvegicus (Rat).